Consider the following 588-residue polypeptide: MNNSINHKFHHISRAEYQELLAVSRGDAVADYIIDNVSILDLINGGEISGPIVIKGRYIAGVGAEYADAPALQRIDARGATAVPGFIDAHLHIESSMMTPVTFETATLPRGLTTVICDPHEIVNVMGEAGFAWFARCAEQARQNQYLQVSSCVPALEGCDVNGASFTLEQMLAWRDHPQVTGLAEMMDYPGVISGQNALLDKLDAFRHLTLDGHCPGLGGKELNAYIAAGIENCHESYQLEEGRRKLQLGMSLMIREGSAARNLNALAPLINEFNSPQCMLCTDDRNPWEIAHEGHIDALIRRLIEQHNVPLHVAYRVASWSTARHFGLNHLGLLAPGKQADIVLLSDARKVTVQQVLVKGEPIDAQTLQAEESARLAQSAPPYGNTIDRQPVSASDFALQFTPGKRYRVIEVIHNELITHSRSSVYSENGFDRDDVCFIAVLERYGQRLAPACGLLGGFGLNEGALAATVSHDSHNIVVIGRSAEEMALAVNQVIQDGGGLCVVRNGQVQSHLPLPIAGLMSTDTAQSLAEQIDALKAAARECGPLPDEPFIQMAFLSLPVIPALKLTSQGLFDGEKFAFTTLEVTE.

This sequence belongs to the metallo-dependent hydrolases superfamily. Adenine deaminase family. Homodimer. It depends on Mn(2+) as a cofactor.

It carries out the reaction adenine + H2O + H(+) = hypoxanthine + NH4(+). This is Adenine deaminase from Escherichia coli O81 (strain ED1a).